The following is a 195-amino-acid chain: CASP-like protein Os03g0196400 (195 aa).

Topologically, residues 1 to 38 (MRQQQAGGVGDGVSPGNVPVCYYGPGGRVPSSLERRAR) are cytoplasmic. The chain crosses the membrane as a helical span at residues 39–59 (AAEVLLRCAACGLAVLAAALL). Residues 60 to 81 (GADRQTRVFFSIQKVARYTDMQ) are Extracellular-facing. Residues 82-102 (SLVLLVIANGMAACYSLIQCA) traverse the membrane as a helical segment. The Cytoplasmic segment spans residues 103–104 (RC). The helical transmembrane segment at 105 to 125 (LVMAYIVISAVAAAMEAALIG) threads the bilayer. At 126-150 (KYGQPEFQWMKTCHLYKRFCAQAGG) the chain is on the extracellular side. A helical transmembrane segment spans residues 151-171 (GVACAIAASVNMVGVALISAF). Over 172-195 (NLFRLYGNSNGGGKATTTTMAGGK) the chain is Cytoplasmic.

It belongs to the Casparian strip membrane proteins (CASP) family. In terms of assembly, homodimer and heterodimers.

The protein resides in the cell membrane. The sequence is that of CASP-like protein Os03g0196400 from Oryza sativa subsp. japonica (Rice).